The chain runs to 257 residues: 1-(5-phosphoribosyl)-5-[(5-phosphoribosylamino)methylideneamino] imidazole-4-carboxamide isomerase (257 aa).

The active-site Proton acceptor is the Asp8. Asp129 (proton donor) is an active-site residue.

The protein belongs to the HisA/HisF family.

It localises to the cytoplasm. It carries out the reaction 1-(5-phospho-beta-D-ribosyl)-5-[(5-phospho-beta-D-ribosylamino)methylideneamino]imidazole-4-carboxamide = 5-[(5-phospho-1-deoxy-D-ribulos-1-ylimino)methylamino]-1-(5-phospho-beta-D-ribosyl)imidazole-4-carboxamide. The protein operates within amino-acid biosynthesis; L-histidine biosynthesis; L-histidine from 5-phospho-alpha-D-ribose 1-diphosphate: step 4/9. This chain is 1-(5-phosphoribosyl)-5-[(5-phosphoribosylamino)methylideneamino] imidazole-4-carboxamide isomerase, found in Cyanothece sp. (strain PCC 7425 / ATCC 29141).